The chain runs to 156 residues: S-ribosylhomocysteine lyase (156 aa).

Residues histidine 56, histidine 60, and cysteine 123 each coordinate Fe cation.

The protein belongs to the LuxS family. Homodimer. The cofactor is Fe cation.

The catalysed reaction is S-(5-deoxy-D-ribos-5-yl)-L-homocysteine = (S)-4,5-dihydroxypentane-2,3-dione + L-homocysteine. In terms of biological role, involved in the synthesis of autoinducer 2 (AI-2) which is secreted by bacteria and is used to communicate both the cell density and the metabolic potential of the environment. The regulation of gene expression in response to changes in cell density is called quorum sensing. Catalyzes the transformation of S-ribosylhomocysteine (RHC) to homocysteine (HC) and 4,5-dihydroxy-2,3-pentadione (DPD). The chain is S-ribosylhomocysteine lyase from Staphylococcus epidermidis (strain ATCC 35984 / DSM 28319 / BCRC 17069 / CCUG 31568 / BM 3577 / RP62A).